A 293-amino-acid polypeptide reads, in one-letter code: Acetyl-coenzyme A carboxylase carboxyl transferase subunit beta (293 aa).

The region spanning 29–293 (LWRKCPRCEG…MGWPPLALDD (265 aa)) is the CoA carboxyltransferase N-terminal domain. Positions 33, 36, 52, and 55 each coordinate Zn(2+). A C4-type zinc finger spans residues 33–55 (CPRCEGVVYRPELDRNMDVCPKC).

This sequence belongs to the AccD/PCCB family. In terms of assembly, acetyl-CoA carboxylase is a heterohexamer composed of biotin carboxyl carrier protein (AccB), biotin carboxylase (AccC) and two subunits each of ACCase subunit alpha (AccA) and ACCase subunit beta (AccD). The cofactor is Zn(2+).

Its subcellular location is the cytoplasm. It carries out the reaction N(6)-carboxybiotinyl-L-lysyl-[protein] + acetyl-CoA = N(6)-biotinyl-L-lysyl-[protein] + malonyl-CoA. Its pathway is lipid metabolism; malonyl-CoA biosynthesis; malonyl-CoA from acetyl-CoA: step 1/1. Its function is as follows. Component of the acetyl coenzyme A carboxylase (ACC) complex. Biotin carboxylase (BC) catalyzes the carboxylation of biotin on its carrier protein (BCCP) and then the CO(2) group is transferred by the transcarboxylase to acetyl-CoA to form malonyl-CoA. This chain is Acetyl-coenzyme A carboxylase carboxyl transferase subunit beta, found in Alcanivorax borkumensis (strain ATCC 700651 / DSM 11573 / NCIMB 13689 / SK2).